The chain runs to 493 residues: Glutamyl-tRNA(Gln) amidotransferase subunit A (493 aa).

Catalysis depends on charge relay system residues lysine 79 and serine 159. Serine 183 acts as the Acyl-ester intermediate in catalysis.

Belongs to the amidase family. GatA subfamily. Heterotrimer of A, B and C subunits.

It catalyses the reaction L-glutamyl-tRNA(Gln) + L-glutamine + ATP + H2O = L-glutaminyl-tRNA(Gln) + L-glutamate + ADP + phosphate + H(+). Allows the formation of correctly charged Gln-tRNA(Gln) through the transamidation of misacylated Glu-tRNA(Gln) in organisms which lack glutaminyl-tRNA synthetase. The reaction takes place in the presence of glutamine and ATP through an activated gamma-phospho-Glu-tRNA(Gln). The sequence is that of Glutamyl-tRNA(Gln) amidotransferase subunit A from Brucella suis biovar 1 (strain 1330).